Here is a 247-residue protein sequence, read N- to C-terminus: Sugar fermentation stimulation protein homolog (247 aa).

Belongs to the SfsA family.

The sequence is that of Sugar fermentation stimulation protein homolog from Oleidesulfovibrio alaskensis (strain ATCC BAA-1058 / DSM 17464 / G20) (Desulfovibrio alaskensis).